An 88-amino-acid chain; its full sequence is DNA-directed RNA polymerase subunit omega (88 aa).

This sequence belongs to the RNA polymerase subunit omega family. As to quaternary structure, the RNAP catalytic core consists of 2 alpha, 1 beta, 1 beta' and 1 omega subunit. When a sigma factor is associated with the core the holoenzyme is formed, which can initiate transcription.

It carries out the reaction RNA(n) + a ribonucleoside 5'-triphosphate = RNA(n+1) + diphosphate. Its function is as follows. Promotes RNA polymerase assembly. Latches the N- and C-terminal regions of the beta' subunit thereby facilitating its interaction with the beta and alpha subunits. The polypeptide is DNA-directed RNA polymerase subunit omega (Anaeromyxobacter dehalogenans (strain 2CP-1 / ATCC BAA-258)).